A 1378-amino-acid polypeptide reads, in one-letter code: DNA-directed RNA polymerase subunit beta (1378 aa).

This sequence belongs to the RNA polymerase beta chain family. The RNAP catalytic core consists of 2 alpha, 1 beta, 1 beta' and 1 omega subunit. When a sigma factor is associated with the core the holoenzyme is formed, which can initiate transcription.

The catalysed reaction is RNA(n) + a ribonucleoside 5'-triphosphate = RNA(n+1) + diphosphate. Its function is as follows. DNA-dependent RNA polymerase catalyzes the transcription of DNA into RNA using the four ribonucleoside triphosphates as substrates. This Roseobacter denitrificans (strain ATCC 33942 / OCh 114) (Erythrobacter sp. (strain OCh 114)) protein is DNA-directed RNA polymerase subunit beta.